Here is a 354-residue protein sequence, read N- to C-terminus: UDP-N-acetylglucosamine--N-acetylmuramyl-(pentapeptide) pyrophosphoryl-undecaprenol N-acetylglucosamine transferase (354 aa).

UDP-N-acetyl-alpha-D-glucosamine-binding positions include Thr-15–Gly-17, Asn-127, Arg-163, Ser-191, Ile-244, Ala-263–Glu-268, and Gln-288.

It belongs to the glycosyltransferase 28 family. MurG subfamily.

It is found in the cell inner membrane. It catalyses the reaction di-trans,octa-cis-undecaprenyl diphospho-N-acetyl-alpha-D-muramoyl-L-alanyl-D-glutamyl-meso-2,6-diaminopimeloyl-D-alanyl-D-alanine + UDP-N-acetyl-alpha-D-glucosamine = di-trans,octa-cis-undecaprenyl diphospho-[N-acetyl-alpha-D-glucosaminyl-(1-&gt;4)]-N-acetyl-alpha-D-muramoyl-L-alanyl-D-glutamyl-meso-2,6-diaminopimeloyl-D-alanyl-D-alanine + UDP + H(+). It participates in cell wall biogenesis; peptidoglycan biosynthesis. Its function is as follows. Cell wall formation. Catalyzes the transfer of a GlcNAc subunit on undecaprenyl-pyrophosphoryl-MurNAc-pentapeptide (lipid intermediate I) to form undecaprenyl-pyrophosphoryl-MurNAc-(pentapeptide)GlcNAc (lipid intermediate II). This is UDP-N-acetylglucosamine--N-acetylmuramyl-(pentapeptide) pyrophosphoryl-undecaprenol N-acetylglucosamine transferase from Vibrio cholerae serotype O1 (strain ATCC 39541 / Classical Ogawa 395 / O395).